The primary structure comprises 244 residues: MNNSLSPKAIRELREETCNPLGAPQVTTDLSENIIMTSLDDLHNWARLSSLWPLLYGTACCFIEFAALIGSRFDFDRFGLVPRSSPRQADLLIVAGTVTMKMAPALVRLYEQMPEPKYVIAMGACTITGGMFSADSTTAVRGVDKLIPVDLYLPGCPPRPEAIFDAVIKLRKKVGNESILERNKAEQTHRYLTVKHDMKLVFSENTGEYLNKKSEKAIKSSDLEMIEENIKVKIEENLIDEETK.

4 residues coordinate [4Fe-4S] cluster: Cys60, Cys61, Cys125, and Cys156.

This sequence belongs to the complex I 20 kDa subunit family. In terms of assembly, NDH-1 can be composed of about 15 different subunits; different subcomplexes with different compositions have been identified which probably have different functions. [4Fe-4S] cluster serves as cofactor.

Its subcellular location is the cellular thylakoid membrane. The enzyme catalyses a plastoquinone + NADH + (n+1) H(+)(in) = a plastoquinol + NAD(+) + n H(+)(out). The catalysed reaction is a plastoquinone + NADPH + (n+1) H(+)(in) = a plastoquinol + NADP(+) + n H(+)(out). In terms of biological role, NDH-1 shuttles electrons from an unknown electron donor, via FMN and iron-sulfur (Fe-S) centers, to quinones in the respiratory and/or the photosynthetic chain. The immediate electron acceptor for the enzyme in this species is believed to be plastoquinone. Couples the redox reaction to proton translocation, and thus conserves the redox energy in a proton gradient. Cyanobacterial NDH-1 also plays a role in inorganic carbon-concentration. The sequence is that of NAD(P)H-quinone oxidoreductase subunit K from Prochlorococcus marinus (strain MIT 9515).